The sequence spans 707 residues: Phosphoprotein (707 aa).

The segment at 1–35 (MDKLDLVNDGLDIIDFIQKNQKEIQKTYGRSSIQQ) is N0 binding. Disordered stretches follow at residues 26–103 (KTYG…EDPD), 193–229 (FVPKNQSTPTEEPPVIPEYYYGSGRRGDLSKSPPRGN), 254–446 (FAKS…AENV), and 454–473 (VTRNEGHDQEVTSNEDSLDD). Polar residues-rich tracts occupy residues 28 to 37 (YGRSSIQQPS) and 77 to 96 (DLSSVTSSDGTIGQRVSNTR). Serine 257 is modified (phosphoserine; by host). Positions 296 to 317 (FPEKEETPDVRRKDSLMQDSCK) are enriched in basic and acidic residues. At serine 350 the chain carries Phosphoserine; by host. Polar residues predominate over residues 435–446 (NQESKSVTAENV). The tract at residues 473-578 (DKYIMPSDDF…LVSMMIMIPG (106 aa)) is multimerization.

In terms of assembly, homotetramer. Interacts (via multimerization domain) with polymerase L; this interaction forms the polymerase L-P complex. Interacts (via N-terminus) with N0 (via Ncore); this interaction allows P to chaperon N0 to avoid N polymerization before encapsidation. Interacts (via C-terminus) with N-RNA template; this interaction positions the polymerase on the template for both transcription and replication.

Functionally, essential cofactor of the RNA polymerase L that plays a central role in the transcription and replication by forming the polymerase complex with RNA polymerase L and recruiting L to the genomic N-RNA template for RNA synthesis. Also plays a central role in the encapsidation of nascent RNA chains by forming the encapsidation complex with the nucleocapsid protein N (N-P complex). Acts as a chaperone for newly synthesized free N protein, so-called N0, allowing encapsidation of nascent RNA chains during replication. The nucleoprotein protein N prevents excessive phosphorylation of P, which leads to down-regulation of viral transcription/ replication. Participates, together with N, in the formation of viral factories (viroplasms), which are large inclusions in the host cytoplasm where replication takes place. The protein is Phosphoprotein (P/V/C) of Equus caballus (Horse).